The chain runs to 392 residues: Early estrogen-induced gene 1 protein (392 aa).

One can recognise a C2 NT-type domain in the interval 2–145 (AFLMKKKKFK…ILKVTIGMFL (144 aa)). The segment at 129–138 (NTRQDNSILK) is required for interaction with TNFRSF11A/RANK. A disordered region spans residues 173 to 324 (LTCKGGGTSS…RKKDSVESHP (152 aa)). The span at 183-194 (GGSSSTNSLTGS) shows a compositional bias: low complexity. Over residues 228–255 (SRNSSYASQQSKLSGYSTEHSRSSSLSD) the composition is skewed to polar residues. Residues 262–273 (TSTSSSASGGLS) are compositionally biased toward low complexity. Composition is skewed to basic and acidic residues over residues 281-300 (GMER…EKPP) and 307-324 (HLSD…ESHP).

The protein belongs to the EEIG family. In terms of assembly, part of a complex composed of EEIG1, TNFRSF11A/RANK, PLCG2, GAB2, TEC and BTK; complex formation increases in the presence of TNFSF11/RANKL. Interacts with PRDM1/BLIMP1; following TNFSF11/RANKL stimulation in bone marrow-derived macrophages, the interaction promotes the binding of PRDM1/BLIMP1 to the gene promoter of IRF8. Interacts (via N-terminus) with TNFRSF11A/RANK (via cytoplasmic domain); when in the presence of TNFSF11/RANKL. Expressed during TNFSF11/RANKL-induced differentiation of bone marrow-derived macrophages to osteoclasts.

It is found in the nucleus. The protein resides in the cytoplasm. Its subcellular location is the membrane raft. Key component of TNFSF11/RANKL- and TNF-induced osteoclastogenesis pathways, thereby mediates bone resorption in pathological bone loss conditions. Required for TNFSF11/RANKL-induced osteoclastogenesis via its interaction with TNFRSF11A/RANK, thereby facilitates the downsteam transcription of NFATC1 and activation of PLCG2. Facilitates recruitment of the transcriptional repressor PRDM1/BLIMP1 to the promoter of the anti-osteoclastogenesis gene IRF8, thereby resulting in transcription of osteoclast differentiation factors. May play a role in estrogen action. The chain is Early estrogen-induced gene 1 protein (Eeig1) from Mus musculus (Mouse).